The sequence spans 366 residues: 4-hydroxy-3-methylbut-2-en-1-yl diphosphate synthase (flavodoxin) (366 aa).

Residues C270, C273, C305, and E312 each contribute to the [4Fe-4S] cluster site.

This sequence belongs to the IspG family. It depends on [4Fe-4S] cluster as a cofactor.

It carries out the reaction (2E)-4-hydroxy-3-methylbut-2-enyl diphosphate + oxidized [flavodoxin] + H2O + 2 H(+) = 2-C-methyl-D-erythritol 2,4-cyclic diphosphate + reduced [flavodoxin]. The protein operates within isoprenoid biosynthesis; isopentenyl diphosphate biosynthesis via DXP pathway; isopentenyl diphosphate from 1-deoxy-D-xylulose 5-phosphate: step 5/6. Its function is as follows. Converts 2C-methyl-D-erythritol 2,4-cyclodiphosphate (ME-2,4cPP) into 1-hydroxy-2-methyl-2-(E)-butenyl 4-diphosphate. This Wigglesworthia glossinidia brevipalpis protein is 4-hydroxy-3-methylbut-2-en-1-yl diphosphate synthase (flavodoxin).